The sequence spans 147 residues: UPF0306 protein YPK_3704 (147 aa).

The protein belongs to the UPF0306 family.

This chain is UPF0306 protein YPK_3704, found in Yersinia pseudotuberculosis serotype O:3 (strain YPIII).